We begin with the raw amino-acid sequence, 274 residues long: Lectizyme (274 aa).

The signal sequence occupies residues 1-16; it reads MKFFAVFALCVASVSA. The Peptidase S1 domain occupies 32–268; that stretch reads IINGHEAEKG…FDKWIEDSIE (237 aa). A disulfide bridge connects residues Cys-57 and Cys-73. Residues His-72 and Asp-119 each act as charge relay system in the active site. 2 disulfide bridges follow: Cys-188-Cys-204 and Cys-215-Cys-244. The active-site Charge relay system is the Ser-219.

Belongs to the peptidase S1 family. Expressed in the midgut.

The protein resides in the secreted. In terms of biological role, protein with lectin and protease activity involved in the establishment of trypanosome infections in tsetse flies. Binds D-glucosamine and agglutinates bloodstream-form trypanosomes and rabbit red blood cells. Capable of inducing transformation of bloodstream-form trypanosomes into procyclic (midgut) forms in vitro. The protein is Lectizyme (Gpl) of Glossina austeni (Savannah tsetse fly).